Consider the following 376-residue polypeptide: Lysocardiolipin acyltransferase 1 (376 aa).

Residues 9 to 29 traverse the membrane as a helical segment; that stretch reads FILFLFAGSFFGSIFMLGPIL. Residue Asn-35 is glycosylated (N-linked (GlcNAc...) asparagine). The chain crosses the membrane as a helical span at residues 48 to 68; sequence ATWLTLPVALLETMFGVRVVI. The short motif at 85–90 is the HXXXXD motif element; it reads HRTRVD. The residue at position 183 (Lys-183) is an N6-acetyllysine. Helical transmembrane passes span 309–329 and 336–356; these read LLSIVYWALFCSAMCLLIYLY and FIISIVFFVLQERIFGGLEII.

Belongs to the 1-acyl-sn-glycerol-3-phosphate acyltransferase family. Widely expressed with highest expression in heart, liver and 12.5 dpc aorta-gonad-mesonephros and lower levels in the 16 dpc fetal liver and adult bone marrow. In bone marrow, highest levels are found in B-cells compared with whole bone marrow, T-cells, erythrocytes, and granulocytes.

Its subcellular location is the endoplasmic reticulum membrane. The enzyme catalyses a 1-acyl-sn-glycero-3-phosphate + an acyl-CoA = a 1,2-diacyl-sn-glycero-3-phosphate + CoA. It catalyses the reaction a 1-acyl-sn-glycero-3-phospho-(1D-myo-inositol) + an acyl-CoA = a 1,2-diacyl-sn-glycero-3-phospho-(1D-myo-inositol) + CoA. The catalysed reaction is 1-acyl-sn-glycero-3-phospho-(1'-sn-glycerol) + an acyl-CoA = a 1,2-diacyl-sn-glycero-3-phospho-(1'-sn-glycerol) + CoA. It carries out the reaction 1-hexadecanoyl-sn-glycero-3-phosphate + (9Z)-octadecenoyl-CoA = 1-hexadecanoyl-2-(9Z-octadecenoyl)-sn-glycero-3-phosphate + CoA. The enzyme catalyses 1-(9Z-octadecenoyl)-sn-glycero-3-phosphate + (9Z)-octadecenoyl-CoA = 1,2-di-(9Z-octadecenoyl)-sn-glycero-3-phosphate + CoA. It catalyses the reaction 1-(9Z,12Z)-octadecadienoyl-sn-glycero-3-phosphate + (9Z)-octadecenoyl-CoA = 1-(9Z,12Z)-octadecadienoyl-2-(9Z)-octadecenoyl-sn-glycero-3-phosphate + CoA. The catalysed reaction is 1-(9Z,12Z,15Z)-octadecatrienoyl-sn-glycero-3-phosphate + (9Z)-octadecenoyl-CoA = 1-(9Z,12Z,15Z)-octadecatrienoyl-2-(9Z)-octadecenoyl-sn-glycero-3-phosphate + CoA. It carries out the reaction 1-(9Z-octadecenoyl)-sn-glycero-3-phosphate + hexadecanoyl-CoA = 1-(9Z)-octadecenoyl-2-hexadecanoyl-sn-glycero-3-phosphate + CoA. The enzyme catalyses 1-(9Z-octadecenoyl)-sn-glycero-3-phosphate + octadecanoyl-CoA = 1-(9Z-octadecenoyl)-2-octadecanoyl-sn-glycero-3-phosphate + CoA. It catalyses the reaction 1-acyl-sn-glycero-3-phospho-(1'-sn-glycerol) + (9Z)-octadecenoyl-CoA = 1-acyl-2-(9Z-octadecenoyl)-sn-glycero-3-phospho-(1'-sn-glycerol) + CoA. The catalysed reaction is a 1-acyl-sn-glycero-3-phospho-(1D-myo-inositol) + (9Z)-octadecenoyl-CoA = a 1-acyl-2-(9Z-octadecenoyl)-sn-glycero-3-phospho-(1D-myo-inositol) + CoA. It carries out the reaction 1-hexadecanoyl-sn-glycero-3-phospho-(1D-myo-inositol) + hexadecanoyl-CoA = 1,2-dihexadecanoyl-sn-glycero-3-phospho-(1D-myo-inositol) + CoA. The enzyme catalyses 1-hexadecanoyl-sn-glycero-3-phospho-(1D-myo-inositol) + octadecanoyl-CoA = 1-hexadecanoyl-2-octadecanoyl-sn-glycero-3-phospho-(1D-myo-inositol) + CoA. It catalyses the reaction 1-hexadecanoyl-sn-glycero-3-phospho-(1D-myo-inositol) + (9Z)-octadecenoyl-CoA = 1-hexadecanoyl-2-(9Z-octadecenoyl)-sn-glycero-3-phospho-(1D-myo-inositol) + CoA. The catalysed reaction is 1-hexadecanoyl-sn-glycero-3-phospho-(1D-myo-inositol) + (9Z,12Z)-octadecadienoyl-CoA = 1-hexadecanoyl-2-(9Z,12Z-octadecadienoyl)-sn-glycero-3-phospho-(1D-myo-inositol) + CoA. It carries out the reaction 1-hexadecanoyl-sn-glycero-3-phospho-(1D-myo-inositol) + (5Z,8Z,11Z,14Z)-eicosatetraenoyl-CoA = 1-hexadecanoyl-2-(5Z,8Z,11Z,14Z-eicosatetraenoyl)-sn-glycero-3-phospho-D-myo-inositol + CoA. The enzyme catalyses 1-hexadecanoyl-sn-glycero-3-phospho-(1'-sn-glycerol) + hexadecanoyl-CoA = 1,2-dihexadecanoyl-sn-glycero-3-phospho-(1'-sn-glycerol) + CoA. It catalyses the reaction 1-hexadecanoyl-sn-glycero-3-phospho-(1'-sn-glycerol) + octadecanoyl-CoA = 1-hexadecanoyl-2-octadecanoyl-sn-glycero-3-phospho-(1'-sn-glycerol) + CoA. The catalysed reaction is 1-hexadecanoyl-sn-glycero-3-phospho-(1'-sn-glycerol) + (9Z)-octadecenoyl-CoA = 1-hexadecanoyl-2-(9Z-octadecenoyl)-sn-glycero-3-phospho-(1'-sn-glycerol) + CoA. It carries out the reaction 1-hexadecanoyl-sn-glycero-3-phospho-(1'-sn-glycerol) + (9Z,12Z)-octadecadienoyl-CoA = 1-hexadecanoyl-2-(9Z,12Z-octadecadienoyl)-sn-glycero-3-phospho-(1'-sn-glycerol) + CoA. The enzyme catalyses 1-tetradecanoyl-sn-glycero-3-phospho-(1'-sn-glycerol) + (9Z)-octadecenoyl-CoA = 1-tetradecanoyl-2-(9Z-octadecenoyl)-sn-glycero-3-phospho-(1'-sn-glycerol) + CoA. It catalyses the reaction 1-octadecanoyl-sn-glycero-3-phospho-(1'-sn-glycerol) + (9Z)-octadecenoyl-CoA = 1-octadecanoyl-2-(9Z-octadecenoyl)-sn-glycero-3-phospho-(1'-sn-glycerol) + CoA. The catalysed reaction is 1-(9Z-octadecenoyl)-sn-glycero-3-phospho-(1'-sn-glycerol) + (9Z)-octadecenoyl-CoA = 1,2-di-(9Z-octadecenoyl)-sn-glycero-3-phospho-(1'-sn-glycerol) + CoA. It carries out the reaction 1-hexadecanoyl-sn-glycero-3-phospho-(1D-myo-inositol) + dodecanoyl-CoA = 1-hexadecanoyl-2-dodecanoyl-sn-glycero-3-phospho-(1D-myo-inositol) + CoA. The enzyme catalyses 1',3'-bis-[1-acyl-sn-glycero-3-phospho]-glycerol + (9Z)-octadecenoyl-CoA = 1'-[1-acyl-2-(9Z)-octadecenoyl-sn-glycero-3-phospho],3'-[1-acyl,2-hydroxy-sn-glycero-3-phospho]-glycerol + CoA. It catalyses the reaction 1'-[1,2-diacyl-sn-glycero-3-phospho],3'-[1-acyl-sn-glycero-3-phospho]-glycerol + (9Z)-octadecenoyl-CoA = 1'-[1,2-diacyl-sn-glycero-3-phospho],3'-[1-acyl,2-(9Z)-octadecenoyl-sn-glycero-3-phospho]-glycerol + CoA. The catalysed reaction is 1'-[1,2-diacyl-sn-glycero-3-phospho],3'-[1-acyl-sn-glycero-3-phospho]-glycerol + (9Z,12Z)-octadecadienoyl-CoA = 1'-[1,2-diacyl-sn-glycero-3-phospho],3'-[1-acyl,2-(9Z,12Z)-octadecadienoyl-sn-glycero-3-phospho]-glycerol + CoA. It carries out the reaction 1'-[1,2-diacyl-sn-glycero-3-phospho],3'-[1-acyl-sn-glycero-3-phospho]-glycerol + dodecanoyl-CoA = 1'-[1,2-diacyl-sn-glycero-3-phospho],3'-[1-acyl,2-dodecanoyl-sn-glycero-3-phospho]-glycerol + CoA. The enzyme catalyses 1',3'-bis-[1-acyl-sn-glycero-3-phospho]-glycerol + dodecanoyl-CoA = 1'-[1-acyl-2-dodecanoyl-sn-glycero-3-phospho],3'-[1-acyl,2-hydroxy-sn-glycero-3-phospho]-glycerol + CoA. It catalyses the reaction a 1-acyl-sn-glycero-3-phosphate + (9Z)-octadecenoyl-CoA = a 1-acyl-2-(9Z-octadecenoyl)-sn-glycero-3-phosphate + CoA. The catalysed reaction is 1',3'-bis-[1-acyl-sn-glycero-3-phospho]-glycerol + (9Z,12Z)-octadecadienoyl-CoA = 1'-[1-acyl-2-(9Z,12Z)-octadecadienoyl-sn-glycero-3-phospho],3'-[1-acyl,2-hydroxy-sn-glycero-3-phospho]-glycerol + CoA. It carries out the reaction 1',3'-bis-[1-acyl-sn-glycero-3-phospho]-glycerol + hexadecanoyl-CoA = 1'-[1-acyl-2-hexadecanoyl-sn-glycero-3-phospho],3'-[1-acyl,2-hydroxy-sn-glycero-3-phospho]-glycerol + CoA. The enzyme catalyses 1',3'-bis-[1-acyl-sn-glycero-3-phospho]-glycerol + octadecanoyl-CoA = 1'-[1-acyl-2-octadecanoyl-sn-glycero-3-phospho],3'-[1-acyl,2-hydroxy-sn-glycero-3-phospho]-glycerol + CoA. It catalyses the reaction 1'-[1,2-diacyl-sn-glycero-3-phospho],3'-[1-acyl-sn-glycero-3-phospho]-glycerol + octanoyl-CoA = 1'-[1,2-diacyl-sn-glycero-3-phospho],3'-[1-acyl,2-octanoyl-sn-glycero-3-phospho]-glycerol + CoA. The catalysed reaction is 1',3'-bis-[1-acyl-sn-glycero-3-phospho]-glycerol + octanoyl-CoA = 1'-[1-acyl-2-octanoyl-sn-glycero-3-phospho],3'-[1-acyl,2-hydroxy-sn-glycero-3-phospho]-glycerol + CoA. It carries out the reaction 1'-[1,2-diacyl-sn-glycero-3-phospho],3'-[1-acyl-sn-glycero-3-phospho]-glycerol + hexadecanoyl-CoA = 1'-[1,2-diacyl-sn-glycero-3-phospho],3'-[1-acyl,2-hexadecanoyl-sn-glycero-3-phospho]-glycerol + CoA. The enzyme catalyses 1'-[1,2-diacyl-sn-glycero-3-phospho],3'-[1-acyl-sn-glycero-3-phospho]-glycerol + (5Z,8Z,11Z,14Z)-eicosatetraenoyl-CoA = 1'-[1,2-diacyl-sn-glycero-3-phospho],3'-[1-acyl,2-(5Z,8Z,11Z,14Z)-eicosatetraenoyl-sn-glycero-3-phospho]-glycerol + CoA. It catalyses the reaction 1',3'-bis-[1-acyl-sn-glycero-3-phospho]-glycerol + (5Z,8Z,11Z,14Z)-eicosatetraenoyl-CoA = 1'-[1-acyl-2-(5Z,8Z,11Z,14Z)-eicosatetraenoyl-sn-glycero-3-phospho],3'-[1-acyl,2-hydroxy-sn-glycero-3-phospho]-glycerol + CoA. The catalysed reaction is a 1-acyl-sn-glycero-3-phospho-(1D-myo-inositol) + octadecanoyl-CoA = a 1-acyl-2-octadecanoyl-sn-glycero-3-phospho-(1D-myo-inositol) + CoA. It carries out the reaction a 2-acyl-sn-glycero-3-phospho-D-myo-inositol + octadecanoyl-CoA = 1-octadecanoyl-2-acyl-sn-glycero-3-phospho-1D-myo-inositol + CoA. Its pathway is phospholipid metabolism; CDP-diacylglycerol biosynthesis; CDP-diacylglycerol from sn-glycerol 3-phosphate: step 2/3. In terms of biological role, exhibits acyl-CoA:lysocardiolipin acyltransferase (ALCAT) activity; catalyzes the reacylation of lyso-cardiolipin to cardiolipin (CL), a key step in CL remodeling. Recognizes both monolysocardiolipin and dilysocardiolipin as substrates with a preference for linoleoyl-CoA and oleoyl-CoA as acyl donors. Also exhibits 1-acyl-sn-glycerol-3-phosphate acyltransferase activity (AGPAT) activity; converts 1-acyl-sn-glycerol-3- phosphate (lysophosphatidic acid or LPA) into 1,2-diacyl-sn-glycerol-3- phosphate (phosphatidic acid or PA) by incorporating an acyl moiety at the sn-2 position of the glycerol backbone. Possesses lysophosphatidylinositol acyltransferase (LPIAT) activity. Possesses lysophosphatidylglycerol acyltransferase (LPGAT) activity. Required for establishment of the hematopoietic and endothelial lineages. This is Lysocardiolipin acyltransferase 1 (Lclat1) from Mus musculus (Mouse).